The chain runs to 150 residues: UPF0506 protein SJCHGC09643 (150 aa).

An N-terminal signal peptide occupies residues 1–18 (MNTCIQLLILCLVTVINS). 4 N-linked (GlcNAc...) asparagine glycosylation sites follow: asparagine 20, asparagine 32, asparagine 48, and asparagine 110. Intrachain disulfides connect cysteine 116-cysteine 130, cysteine 123-cysteine 134, and cysteine 129-cysteine 139.

The protein belongs to the UPF0506 family.

It is found in the secreted. The protein is UPF0506 protein SJCHGC09643 of Schistosoma japonicum (Blood fluke).